Here is a 572-residue protein sequence, read N- to C-terminus: Urocanate hydratase (572 aa).

NAD(+)-binding positions include G48–G49, Q126, G172–G174, D192, N238–A239, Q259–H263, Y268–L269, and Y317. Residue C405 is part of the active site. G487 contacts NAD(+). Residues E550–A559 show a composition bias toward basic and acidic residues. Positions E550 to V572 are disordered.

The protein belongs to the urocanase family. It depends on NAD(+) as a cofactor.

It is found in the cytoplasm. It carries out the reaction 4-imidazolone-5-propanoate = trans-urocanate + H2O. It participates in amino-acid degradation; L-histidine degradation into L-glutamate; N-formimidoyl-L-glutamate from L-histidine: step 2/3. In terms of biological role, catalyzes the conversion of urocanate to 4-imidazolone-5-propionate. The polypeptide is Urocanate hydratase (Streptomyces coelicolor (strain ATCC BAA-471 / A3(2) / M145)).